A 243-amino-acid chain; its full sequence is Small ribosomal subunit protein eS4 (243 aa).

One can recognise an S4 RNA-binding domain in the interval 37 to 99 (IPLALLLKHY…SDLYFRIVPD (63 aa)).

The protein belongs to the eukaryotic ribosomal protein eS4 family.

This chain is Small ribosomal subunit protein eS4 (rps4e), found in Sulfurisphaera tokodaii (strain DSM 16993 / JCM 10545 / NBRC 100140 / 7) (Sulfolobus tokodaii).